The primary structure comprises 393 residues: GDP-4-keto-6-deoxy-D-mannose 3-dehydratase (393 aa).

30–33 (NMFT) contacts GDP-4-dehydro-alpha-D-rhamnose. A helical transmembrane segment spans residues 53–73 (YSVMVSSGSTANLLMIAALFF). Pyridoxal 5'-phosphate is bound by residues 60–61 (GS), tryptophan 92, glutamate 166, and serine 187. The Proton donor/acceptor role is filled by histidine 192. Histidine 219 is an L-glutamate binding site. Position 223 (arginine 223) interacts with GDP-4-dehydro-alpha-D-rhamnose. A pyridoxal 5'-phosphate-binding site is contributed by asparagine 252. Residue arginine 254 participates in L-glutamate binding. A GDP-4-dehydro-alpha-D-rhamnose-binding site is contributed by glutamate 333.

The protein belongs to the DegT/DnrJ/EryC1 family. In terms of assembly, homodimer. The cofactor is pyridoxal 5'-phosphate.

The protein resides in the cell membrane. The catalysed reaction is GDP-4-dehydro-alpha-D-rhamnose + L-glutamate = GDP-4-dehydro-3,6-dideoxy-alpha-D-mannose + 2-oxoglutarate + NH4(+). It participates in nucleotide-sugar metabolism; GDP-L-colitose biosynthesis. In terms of biological role, involved in the biosynthesis of L-colitose, a 3,6-dideoxyhexose present in the O-antigen region of lipopolysaccharides (LPS), where it serves as an antigenic determinant and is vital for bacterial defense and survival. Catalyzes the removal of the C3'-hydroxyl group from GDP-4-keto-6-deoxy-D-mannose via a combined transamination-deoxygenation reaction. The catalysis is initiated by a transamination step in which pyridoxal 5'-phosphate (PLP) is converted to pyridoxamine 5'-phosphate (PMP) in the presence of L-glutamate. This coenzyme then forms a Schiff base with GDP-4-keto-6-deoxy-D-mannose and the resulting adduct undergoes a PMP-mediated beta-dehydration reaction to give a sugar enamine intermediate, which after tautomerization and hydrolysis to release ammonia yields GDP-4-keto-3,6-dideoxy-D-mannose as a product. This chain is GDP-4-keto-6-deoxy-D-mannose 3-dehydratase, found in Yersinia pseudotuberculosis.